Reading from the N-terminus, the 310-residue chain is Mitochondrial citrate transporter F (310 aa).

Solcar repeat units follow at residues 23-108, 115-207, and 216-303; these read KKVH…LKNH, PPGL…FKRL, and DNMG…HKKL. Transmembrane regions (helical) follow at residues 29–49, 85–105, 122–142, 186–206, 222–242, and 275–296; these read FWFGGSASCFAAAVTHPLDLV, SAAILRQLTYSTTRFGIYEEL, IGMASASGFIGGMAGNPADVL, NSTRAVLMTTSQLASYDTFKR, FTASFMAGFVATTVCSPVDVI, and AFRGWVPSFIRLGPHTIATFIF.

This sequence belongs to the mitochondrial carrier (TC 2.A.29) family.

It localises to the mitochondrion inner membrane. Its function is as follows. Mitochondrial transporter that does not mediate citrate export from mitochondria to cytoplasm. Its exact function has still to be determined. In Aspergillus niger (strain ATCC 1015 / CBS 113.46 / FGSC A1144 / LSHB Ac4 / NCTC 3858a / NRRL 328 / USDA 3528.7), this protein is Mitochondrial citrate transporter F.